The chain runs to 331 residues: Ketol-acid reductoisomerase (NADP(+)) (331 aa).

The KARI N-terminal Rossmann domain maps to Leu-2–Thr-181. NADP(+) contacts are provided by residues Tyr-25–Gln-28, Arg-48, Ser-52, and Asp-82–Gln-85. The active site involves His-107. Residue Gly-133 coordinates NADP(+). A KARI C-terminal knotted domain is found at Ser-182 to Phe-327. Mg(2+)-binding residues include Asp-190, Glu-194, Glu-226, and Glu-230. Position 251 (Ser-251) interacts with substrate.

Belongs to the ketol-acid reductoisomerase family. It depends on Mg(2+) as a cofactor.

The catalysed reaction is (2R)-2,3-dihydroxy-3-methylbutanoate + NADP(+) = (2S)-2-acetolactate + NADPH + H(+). It carries out the reaction (2R,3R)-2,3-dihydroxy-3-methylpentanoate + NADP(+) = (S)-2-ethyl-2-hydroxy-3-oxobutanoate + NADPH + H(+). It participates in amino-acid biosynthesis; L-isoleucine biosynthesis; L-isoleucine from 2-oxobutanoate: step 2/4. It functions in the pathway amino-acid biosynthesis; L-valine biosynthesis; L-valine from pyruvate: step 2/4. In terms of biological role, involved in the biosynthesis of branched-chain amino acids (BCAA). Catalyzes an alkyl-migration followed by a ketol-acid reduction of (S)-2-acetolactate (S2AL) to yield (R)-2,3-dihydroxy-isovalerate. In the isomerase reaction, S2AL is rearranged via a Mg-dependent methyl migration to produce 3-hydroxy-3-methyl-2-ketobutyrate (HMKB). In the reductase reaction, this 2-ketoacid undergoes a metal-dependent reduction by NADPH to yield (R)-2,3-dihydroxy-isovalerate. This chain is Ketol-acid reductoisomerase (NADP(+)), found in Methanospirillum hungatei JF-1 (strain ATCC 27890 / DSM 864 / NBRC 100397 / JF-1).